The sequence spans 462 residues: UPF0236 protein TTE2489 (462 aa).

The protein belongs to the UPF0236 family.

In Caldanaerobacter subterraneus subsp. tengcongensis (strain DSM 15242 / JCM 11007 / NBRC 100824 / MB4) (Thermoanaerobacter tengcongensis), this protein is UPF0236 protein TTE2489.